Here is a 274-residue protein sequence, read N- to C-terminus: Large ribosomal subunit protein uL2 (274 aa).

The segment at 221–274 (RGTAMNPVDHPHGGGEGKNFGKHPVTPWGVQTKGKKTRSNKRTDKFIVRRRSKK) is disordered.

Belongs to the universal ribosomal protein uL2 family. As to quaternary structure, part of the 50S ribosomal subunit. Forms a bridge to the 30S subunit in the 70S ribosome.

One of the primary rRNA binding proteins. Required for association of the 30S and 50S subunits to form the 70S ribosome, for tRNA binding and peptide bond formation. It has been suggested to have peptidyltransferase activity; this is somewhat controversial. Makes several contacts with the 16S rRNA in the 70S ribosome. The chain is Large ribosomal subunit protein uL2 from Serratia proteamaculans (strain 568).